The primary structure comprises 393 residues: Lipoyl synthase, mitochondrial (393 aa).

7 residues coordinate [4Fe-4S] cluster: C115, C120, C126, C146, C150, C153, and S362. The 221-residue stretch at E131–R351 folds into the Radical SAM core domain.

The protein belongs to the radical SAM superfamily. Lipoyl synthase family. It depends on [4Fe-4S] cluster as a cofactor.

It localises to the mitochondrion. It catalyses the reaction [[Fe-S] cluster scaffold protein carrying a second [4Fe-4S](2+) cluster] + N(6)-octanoyl-L-lysyl-[protein] + 2 oxidized [2Fe-2S]-[ferredoxin] + 2 S-adenosyl-L-methionine + 4 H(+) = [[Fe-S] cluster scaffold protein] + N(6)-[(R)-dihydrolipoyl]-L-lysyl-[protein] + 4 Fe(3+) + 2 hydrogen sulfide + 2 5'-deoxyadenosine + 2 L-methionine + 2 reduced [2Fe-2S]-[ferredoxin]. The protein operates within protein modification; protein lipoylation via endogenous pathway; protein N(6)-(lipoyl)lysine from octanoyl-[acyl-carrier-protein]: step 2/2. In terms of biological role, catalyzes the radical-mediated insertion of two sulfur atoms into the C-6 and C-8 positions of the octanoyl moiety bound to the lipoyl domains of lipoate-dependent enzymes, thereby converting the octanoylated domains into lipoylated derivatives. This chain is Lipoyl synthase, mitochondrial, found in Vitis vinifera (Grape).